The following is a 231-amino-acid chain: Response regulator Rre1 (231 aa).

Positions 6 to 123 constitute a Response regulatory domain; it reads SLLLVDDEPG…ELEAIVRNLL (118 aa). At Asp-56 the chain carries 4-aspartylphosphate. In terms of domain architecture, HTH luxR-type spans 163–228; the sequence is PSPIKLDFTP…ELVRFALQHG (66 aa). A DNA-binding region (H-T-H motif) is located at residues 187–206; the sequence is NKEIAAQLKTSVRNVEKYVS.

Interacts with histidine kinase Hik2; may accept phosphate from Hik2.

Functionally, member of at least 2 two-component regulatory systems Hik2/Rre1 and Hik34/Rre1. Responds to hyperosmotic stress, regulates expression of at least 24 genes including dnaK2 and hspA with Hik34 and sigB (sll0306), sll0528, slr1119, slr0852 and ssr3188 with Hik2. Responds to salt stress, regulates expression of at least 24 genes including adhA, dnaK2 and hspA with Hik34. Binds the adhA promoter. Phosphorylated by Hik2 in vitro. Phosphorylated protein has 10-fold higher affinity for DNA than unphosphorylated protein. The sequence is that of Response regulator Rre1 from Synechocystis sp. (strain ATCC 27184 / PCC 6803 / Kazusa).